An 871-amino-acid polypeptide reads, in one-letter code: Isoleucine--tRNA ligase (871 aa).

The 'HIGH' region signature appears at 57–67 (PYANGNLHMGH). Position 554 (Glu554) interacts with L-isoleucyl-5'-AMP. The 'KMSKS' region signature appears at 595–599 (KMSKS). Lys598 lines the ATP pocket.

Belongs to the class-I aminoacyl-tRNA synthetase family. IleS type 1 subfamily. As to quaternary structure, monomer.

It localises to the cytoplasm. The catalysed reaction is tRNA(Ile) + L-isoleucine + ATP = L-isoleucyl-tRNA(Ile) + AMP + diphosphate. Its function is as follows. Catalyzes the attachment of isoleucine to tRNA(Ile). As IleRS can inadvertently accommodate and process structurally similar amino acids such as valine, to avoid such errors it has two additional distinct tRNA(Ile)-dependent editing activities. One activity is designated as 'pretransfer' editing and involves the hydrolysis of activated Val-AMP. The other activity is designated 'posttransfer' editing and involves deacylation of mischarged Val-tRNA(Ile). The protein is Isoleucine--tRNA ligase of Staphylococcus epidermidis.